The chain runs to 216 residues: Guanylate kinase (216 aa).

The Guanylate kinase-like domain occupies 12–191 (GLLFVISSPS…CVKQVKNILT (180 aa)). 19–26 (SPSGAGKS) lines the ATP pocket.

Belongs to the guanylate kinase family.

It is found in the cytoplasm. It carries out the reaction GMP + ATP = GDP + ADP. Its function is as follows. Essential for recycling GMP and indirectly, cGMP. The protein is Guanylate kinase of Zymomonas mobilis subsp. mobilis (strain ATCC 31821 / ZM4 / CP4).